The following is a 491-amino-acid chain: Glutamate--tRNA ligase (491 aa).

Positions 14–24 (PSPTGSPHVGL) match the 'HIGH' region motif. Cys111, Cys113, Cys136, and Asp138 together coordinate Zn(2+). A 'KMSKS' region motif is present at residues 257-261 (KLSKR). Residue Lys260 participates in ATP binding.

It belongs to the class-I aminoacyl-tRNA synthetase family. Glutamate--tRNA ligase type 1 subfamily. Monomer. The cofactor is Zn(2+).

It localises to the cytoplasm. It carries out the reaction tRNA(Glu) + L-glutamate + ATP = L-glutamyl-tRNA(Glu) + AMP + diphosphate. In terms of biological role, catalyzes the attachment of glutamate to tRNA(Glu) in a two-step reaction: glutamate is first activated by ATP to form Glu-AMP and then transferred to the acceptor end of tRNA(Glu). The polypeptide is Glutamate--tRNA ligase (Nocardioides sp. (strain ATCC BAA-499 / JS614)).